The chain runs to 377 residues: Nitric oxide reductase FlRd-NAD(+) reductase (377 aa).

The protein belongs to the FAD-dependent oxidoreductase family. It depends on FAD as a cofactor.

It localises to the cytoplasm. The catalysed reaction is 2 reduced [nitric oxide reductase rubredoxin domain] + NAD(+) + H(+) = 2 oxidized [nitric oxide reductase rubredoxin domain] + NADH. The protein operates within nitrogen metabolism; nitric oxide reduction. In terms of biological role, one of at least two accessory proteins for anaerobic nitric oxide (NO) reductase. Reduces the rubredoxin moiety of NO reductase. This Shigella boydii serotype 18 (strain CDC 3083-94 / BS512) protein is Nitric oxide reductase FlRd-NAD(+) reductase.